Here is a 257-residue protein sequence, read N- to C-terminus: 5'-nucleotidase SurE (257 aa).

A divalent metal cation-binding residues include Asp-8, Asp-9, Ser-39, and Asn-87. The disordered stretch occupies residues 234–257 (VSPLTAPHPTTGHEGLAGLAEKYQ).

It belongs to the SurE nucleotidase family. Requires a divalent metal cation as cofactor.

Its subcellular location is the cytoplasm. It carries out the reaction a ribonucleoside 5'-phosphate + H2O = a ribonucleoside + phosphate. Nucleotidase that shows phosphatase activity on nucleoside 5'-monophosphates. This chain is 5'-nucleotidase SurE, found in Natronomonas pharaonis (strain ATCC 35678 / DSM 2160 / CIP 103997 / JCM 8858 / NBRC 14720 / NCIMB 2260 / Gabara) (Halobacterium pharaonis).